We begin with the raw amino-acid sequence, 232 residues long: Somatolactin (232 aa).

Residues 1-16 (MHNWKGVWLCSLFLTF) form the signal peptide. 3 disulfides stabilise this stretch: Cys31-Cys41, Cys91-Cys206, and Cys223-Cys231. N-linked (GlcNAc...) asparagine glycosylation occurs at Asn147.

This sequence belongs to the somatotropin/prolactin family. In terms of tissue distribution, pituitary gland.

It is found in the secreted. This Protopterus annectens (African lungfish) protein is Somatolactin.